A 156-amino-acid polypeptide reads, in one-letter code: Small ribosomal subunit protein uS7c (156 aa).

The protein belongs to the universal ribosomal protein uS7 family. As to quaternary structure, part of the 30S ribosomal subunit.

The protein resides in the plastid. The protein localises to the chloroplast. One of the primary rRNA binding proteins, it binds directly to 16S rRNA where it nucleates assembly of the head domain of the 30S subunit. This Guillardia theta (Cryptophyte) protein is Small ribosomal subunit protein uS7c (rps7).